Consider the following 209-residue polypeptide: uncharacterized protein (209 aa).

2 disordered regions span residues 1 to 80 (MFVR…PPVE) and 164 to 197 (LPAG…PGME). The segment covering 178–189 (SRGSSRSSCSQR) has biased composition (low complexity).

This is an uncharacterized protein from Homo sapiens (Human).